The following is a 124-amino-acid chain: Protein MGF 110-8L (124 aa).

Positions 1–16 (MKVLILVLLGVVILQA) are cleaved as a signal peptide. N-linked (GlcNAc...) asparagine; by host glycosylation is found at Asn76 and Asn94.

It belongs to the asfivirus MGF 110 family.

Plays a role in virus cell tropism, and may be required for efficient virus replication in macrophages. The protein is Protein MGF 110-8L of Ornithodoros (relapsing fever ticks).